We begin with the raw amino-acid sequence, 534 residues long: CTP synthase (534 aa).

Residues 1–267 are amidoligase domain; the sequence is MTKYIFVTGG…DQIVCDHLKL (267 aa). Ser-13 provides a ligand contact to CTP. Ser-13 is a binding site for UTP. 14–19 is a binding site for ATP; it reads SIGKGI. Tyr-54 lines the L-glutamine pocket. Asp-71 provides a ligand contact to ATP. Positions 71 and 141 each coordinate Mg(2+). Residues 148 to 150, 188 to 193, and Lys-224 contribute to the CTP site; these read DIE and KTKPTQ. UTP contacts are provided by residues 188–193 and Lys-224; that span reads KTKPTQ. Residue 240 to 242 participates in ATP binding; that stretch reads RDV. The Glutamine amidotransferase type-1 domain occupies 292–534; sequence KIALVGKYVE…FVTAAIKNSN (243 aa). Residue Gly-354 participates in L-glutamine binding. Cys-381 serves as the catalytic Nucleophile; for glutamine hydrolysis. Residues 382 to 385, Glu-405, and Arg-463 each bind L-glutamine; that span reads LGMQ. Active-site residues include His-508 and Glu-510.

It belongs to the CTP synthase family. Homotetramer.

It carries out the reaction UTP + L-glutamine + ATP + H2O = CTP + L-glutamate + ADP + phosphate + 2 H(+). It catalyses the reaction L-glutamine + H2O = L-glutamate + NH4(+). The enzyme catalyses UTP + NH4(+) + ATP = CTP + ADP + phosphate + 2 H(+). It participates in pyrimidine metabolism; CTP biosynthesis via de novo pathway; CTP from UDP: step 2/2. With respect to regulation, allosterically activated by GTP, when glutamine is the substrate; GTP has no effect on the reaction when ammonia is the substrate. The allosteric effector GTP functions by stabilizing the protein conformation that binds the tetrahedral intermediate(s) formed during glutamine hydrolysis. Inhibited by the product CTP, via allosteric rather than competitive inhibition. In terms of biological role, catalyzes the ATP-dependent amination of UTP to CTP with either L-glutamine or ammonia as the source of nitrogen. Regulates intracellular CTP levels through interactions with the four ribonucleotide triphosphates. The protein is CTP synthase of Streptococcus pyogenes serotype M4 (strain MGAS10750).